The following is an 840-amino-acid chain: Origin recognition complex subunit 1 (840 aa).

The 127-residue stretch at 44–170 (IHIKVGQFVL…KKDFAPLPPE (127 aa)) folds into the BAH domain. 2 disordered regions span residues 195-218 (VKSPARNTTEQEVKGIKSNHSTSK) and 242-301 (FTRK…KNGQ). Phosphoserine occurs at positions 197, 255, 258, 276, 291, and 332. Over residues 392–414 (DGDDRDQEEEESVDSESEEEDEF) the composition is skewed to acidic residues. The interval 392-456 (DGDDRDQEEE…HRATPQIRDR (65 aa)) is disordered. Positions 418–439 (LPTRNSLGQSRTRQTPSKSPQK) are enriched in polar residues. ATP is bound by residues V479 and 513 to 521 (GVPGTGKTA). The interval 480 to 840 (PDSLPCREQE…NDVLFALKEE (361 aa)) is necessary and sufficient for ORC complex assembly. D599 and E600 together coordinate Mg(2+). 3 residues coordinate ATP: E600, N633, and R699.

Belongs to the ORC1 family. As to quaternary structure, component of ORC, a complex composed of at least 6 subunits: ORC1, ORC2, ORC3, ORC4, ORC5 and ORC6. ORC is regulated in a cell-cycle dependent manner. It is sequentially assembled at the exit from anaphase of mitosis and disassembled as cells enter S phase. Interacts with CDC6 and KAT7/HBO1. Interacts with LRWD1 predominantly during the G1 phase and with less affinity during mitosis, when phosphorylated. Phosphorylated during mitosis.

The protein localises to the nucleus. Functionally, component of the origin recognition complex (ORC) that binds origins of replication. DNA-binding is ATP-dependent. The specific DNA sequences that define origins of replication have not been identified yet. ORC is required to assemble the pre-replication complex necessary to initiate DNA replication. This chain is Origin recognition complex subunit 1 (Orc1), found in Mus musculus (Mouse).